A 181-amino-acid polypeptide reads, in one-letter code: Large ribosomal subunit protein uL5 (181 aa).

It belongs to the universal ribosomal protein uL5 family. As to quaternary structure, part of the 50S ribosomal subunit; part of the 5S rRNA/L5/L18/L25 subcomplex. Contacts the 5S rRNA and the P site tRNA. Forms a bridge to the 30S subunit in the 70S ribosome.

Functionally, this is one of the proteins that bind and probably mediate the attachment of the 5S RNA into the large ribosomal subunit, where it forms part of the central protuberance. In the 70S ribosome it contacts protein S13 of the 30S subunit (bridge B1b), connecting the 2 subunits; this bridge is implicated in subunit movement. Contacts the P site tRNA; the 5S rRNA and some of its associated proteins might help stabilize positioning of ribosome-bound tRNAs. The sequence is that of Large ribosomal subunit protein uL5 from Helicobacter pylori (strain HPAG1).